The chain runs to 245 residues: Nodulation protein G (245 aa).

An NAD(+)-binding site is contributed by 11 to 35; that stretch reads VTGASGGIGEAIARVLHAQGAIVGL. Serine 139 serves as a coordination point for substrate. Tyrosine 152 serves as the catalytic Proton acceptor.

This sequence belongs to the short-chain dehydrogenases/reductases (SDR) family.

Functionally, proposed to modify Nod factor fatty acyl chain. This chain is Nodulation protein G (nodG), found in Rhizobium sp. (strain N33).